The sequence spans 143 residues: Interferon gamma (143 aa).

At Gln1 the chain carries Pyrrolidone carboxylic acid. Asn25 and Asn97 each carry an N-linked (GlcNAc...) asparagine glycan.

This sequence belongs to the type II (or gamma) interferon family. Homodimer. Interacts with IFNGR1 (via extracellular domain); this interaction promotes IFNGR1 dimerization.

It is found in the secreted. Its function is as follows. Type II interferon produced by immune cells such as T-cells and NK cells that plays crucial roles in antimicrobial, antiviral, and antitumor responses by activating effector immune cells and enhancing antigen presentation. Primarily signals through the JAK-STAT pathway after interaction with its receptor IFNGR1 to affect gene regulation. Upon IFNG binding, IFNGR1 intracellular domain opens out to allow association of downstream signaling components JAK2, JAK1 and STAT1, leading to STAT1 activation, nuclear translocation and transcription of IFNG-regulated genes. Many of the induced genes are transcription factors such as IRF1 that are able to further drive regulation of a next wave of transcription. Plays a role in class I antigen presentation pathway by inducing a replacement of catalytic proteasome subunits with immunoproteasome subunits. In turn, increases the quantity, quality, and repertoire of peptides for class I MHC loading. Increases the efficiency of peptide generation also by inducing the expression of activator PA28 that associates with the proteasome and alters its proteolytic cleavage preference. Up-regulates as well MHC II complexes on the cell surface by promoting expression of several key molecules such as cathepsins B/CTSB, H/CTSH, and L/CTSL. Participates in the regulation of hematopoietic stem cells during development and under homeostatic conditions by affecting their development, quiescence, and differentiation. This is Interferon gamma (IFNG) from Pan troglodytes (Chimpanzee).